We begin with the raw amino-acid sequence, 123 residues long: Small ribosomal subunit protein uS12c (123 aa).

This sequence belongs to the universal ribosomal protein uS12 family. Part of the 30S ribosomal subunit.

It is found in the plastid. The protein resides in the chloroplast. In terms of biological role, with S4 and S5 plays an important role in translational accuracy. Located at the interface of the 30S and 50S subunits. The chain is Small ribosomal subunit protein uS12c (rps12) from Marchantia polymorpha (Common liverwort).